Reading from the N-terminus, the 328-residue chain is Aspartate carbamoyltransferase catalytic subunit (328 aa).

Carbamoyl phosphate is bound by residues R64 and T65. L-aspartate is bound at residue K92. Carbamoyl phosphate-binding residues include R114, H144, and Q147. The L-aspartate site is built by R177 and R232. G273 and P274 together coordinate carbamoyl phosphate.

It belongs to the aspartate/ornithine carbamoyltransferase superfamily. ATCase family. As to quaternary structure, heterododecamer (2C3:3R2) of six catalytic PyrB chains organized as two trimers (C3), and six regulatory PyrI chains organized as three dimers (R2).

It carries out the reaction carbamoyl phosphate + L-aspartate = N-carbamoyl-L-aspartate + phosphate + H(+). Its pathway is pyrimidine metabolism; UMP biosynthesis via de novo pathway; (S)-dihydroorotate from bicarbonate: step 2/3. In terms of biological role, catalyzes the condensation of carbamoyl phosphate and aspartate to form carbamoyl aspartate and inorganic phosphate, the committed step in the de novo pyrimidine nucleotide biosynthesis pathway. This is Aspartate carbamoyltransferase catalytic subunit from Halorhodospira halophila (strain DSM 244 / SL1) (Ectothiorhodospira halophila (strain DSM 244 / SL1)).